We begin with the raw amino-acid sequence, 891 residues long: MEYRTNNVPVGNETKSAALNALPKIKISDSPNRHHNLVDAFMQSPSYSTQPKSAVEPLGLSFSPGYISPSSQSPHHGPVRSPSSRKPLPASPSRTRDHSLRVPVSGHSYSADEKPRERRKVIGNYVLGKTIGAGSMGKVKVAHHLKTGEQFAIKIVTRLHPDITKAKAAASAEATKAAQSEKNKEIRTVREAALSTLLRHPYICEARDVYITNSHYYMVFEFVDGGQMLDYIISHGKLKEKQARKFVRQIGSALSYLHQNSVVHRDLKIENILISKTGDIKIIDFGLSNLYRRQSRLRTFCGSLYFAAPELLNAQPYIGPEVDVWSFGIVLYVLVCGKVPFDDQNMSALHAKIKKGTVEYPSYLSSDCKGLLSRMLVTDPLKRATLEEVLNHPWMIRNYEGPPASFAPERSPITLPLDPEIIREMNGFDFGPPEKIVRELTKVISSEAYQSLAKTGFYSGPNSADKKKSFFEFRIRHAAHDIENPILPSLSMNTDIYDAFHPLISIYYLVSERRVYEKGGNWNRIAKTPVSSVPSSPVQPTSYNRTLPPMPEVVAYKGDEESPRVSRNTSLARRKPLPDTESHSPSPSATSSIKKNPSSIFRRFSSRRKQNKSSTSTLQISAPLETSQSPPTPRTKPSHKPPVSYKNKLVTQSAIGRSTSVREGRYAGISSQMDSLNMDSTGPSASNMANAPPSVRNNRVLNPRGASLGHGRMSTSTTNRQKQILNETMGNPVDKNSTSPSKSTDKLDPIKPVFLKGLFSVSTTSTKSTESIQRDLIRVMGMLDIEYKEIKGGYACLYKPQGIRTPTKSTSVHTRRKPSYGSNSTTDSYGSVPDTVPLDDNGESPASNLAFEIYIVKVPILSLRGVSFHRISGNSWQYKTLASRILNELKL.

A disordered region spans residues 65 to 116 (GYISPSSQSPHHGPVRSPSSRKPLPASPSRTRDHSLRVPVSGHSYSADEKPR). The region spanning 125-395 (YVLGKTIGAG…LEEVLNHPWM (271 aa)) is the Protein kinase domain. ATP-binding positions include 131 to 139 (IGAGSMGKV) and Lys154. Asp266 serves as the catalytic Proton acceptor. Thr528 is modified (phosphothreonine). Disordered stretches follow at residues 528 to 699 (TPVS…RNNR), 728 to 747 (TMGNPVDKNSTSPSKSTDKL), and 805 to 841 (TPTKSTSVHTRRKPSYGSNSTTDSYGSVPDTVPLDDN). Low complexity-rich tracts occupy residues 529-538 (PVSSVPSSPV) and 583-603 (HSPSPSATSSIKKNPSSIFRR). A phosphoserine mark is found at Ser535 and Ser536. 5 stretches are compositionally biased toward polar residues: residues 612–629 (KSSTSTLQISAPLETSQS), 649–659 (LVTQSAIGRST), 669–699 (ISSQMDSLNMDSTGPSASNMANAPPSVRNNR), 728–742 (TMGNPVDKNSTSPSK), and 820–829 (YGSNSTTDSY). One can recognise a KA1 domain in the interval 842-891 (GESPASNLAFEIYIVKVPILSLRGVSFHRISGNSWQYKTLASRILNELKL).

The protein belongs to the protein kinase superfamily. Ser/Thr protein kinase family.

It localises to the cytoplasm. It carries out the reaction L-seryl-[protein] + ATP = O-phospho-L-seryl-[protein] + ADP + H(+). The enzyme catalyses L-threonyl-[protein] + ATP = O-phospho-L-threonyl-[protein] + ADP + H(+). Has a role in establishing the characteristic rod cell shape. Important for cell polarity and is involved in directing growth to the cell ends. The polypeptide is Protein kinase kin1 (kin1) (Schizosaccharomyces pombe (strain 972 / ATCC 24843) (Fission yeast)).